Consider the following 92-residue polypeptide: Small ribosomal subunit protein uS19 (92 aa).

It belongs to the universal ribosomal protein uS19 family.

Protein S19 forms a complex with S13 that binds strongly to the 16S ribosomal RNA. The protein is Small ribosomal subunit protein uS19 of Dinoroseobacter shibae (strain DSM 16493 / NCIMB 14021 / DFL 12).